The sequence spans 475 residues: Ribosomal protein uS12 methylthiotransferase RimO (475 aa).

One can recognise an MTTase N-terminal domain in the interval 36-150 (NKINFISLGC…ILKAVQSTQK (115 aa)). 6 residues coordinate [4Fe-4S] cluster: cysteine 45, cysteine 81, cysteine 113, cysteine 185, cysteine 189, and cysteine 192. The Radical SAM core domain maps to 171-403 (STPKHYAYLK…MQVQKKVVKK (233 aa)). Positions 406–475 (KKMIGKKIAV…ADYDLVGHVI (70 aa)) constitute a TRAM domain.

It belongs to the methylthiotransferase family. RimO subfamily. The cofactor is [4Fe-4S] cluster.

It localises to the cytoplasm. It catalyses the reaction L-aspartate(89)-[ribosomal protein uS12]-hydrogen + (sulfur carrier)-SH + AH2 + 2 S-adenosyl-L-methionine = 3-methylsulfanyl-L-aspartate(89)-[ribosomal protein uS12]-hydrogen + (sulfur carrier)-H + 5'-deoxyadenosine + L-methionine + A + S-adenosyl-L-homocysteine + 2 H(+). Catalyzes the methylthiolation of an aspartic acid residue of ribosomal protein uS12. This chain is Ribosomal protein uS12 methylthiotransferase RimO, found in Protochlamydia amoebophila (strain UWE25).